We begin with the raw amino-acid sequence, 262 residues long: 3-dehydro-D-guloside 4-epimerase (262 aa).

The active-site Proton donor/acceptor is the Glu146. Glu146 and Asp179 together coordinate Mn(2+). His182 is a substrate binding site. His205 is a binding site for Mn(2+). Arg211 is a substrate binding site. Glu240 acts as the Proton donor/acceptor in catalysis. Residue Glu240 participates in Mn(2+) binding.

It belongs to the hyi family. Requires Mn(2+) as cofactor.

The catalysed reaction is a 3-dehydro-D-guloside = a 3-dehydro-D-glucoside. In terms of biological role, catalyzes the epimerization at C4 of 3-dehydro-D-gulosides leading to 3-dehydro-D-glucosides. Probably functions in a metabolic pathway that transforms D-gulosides to D-glucosides. Can use methyl alpha-3-dehydro-D-glucoside and methyl beta-3-dehydro-D-glucoside as substrates in vitro. However, the actual specific physiological substrates for this metabolic pathway are unknown. Cannot act on D-psicose, D-fructose, D-tagatose, D-sorbose, L-xylulose, or L-ribulose. The sequence is that of 3-dehydro-D-guloside 4-epimerase (ycjR) from Escherichia coli (strain K12).